A 238-amino-acid chain; its full sequence is Ribonuclease PH (238 aa).

Phosphate is bound by residues Arg-86 and 124–126; that span reads GTR.

It belongs to the RNase PH family. As to quaternary structure, homohexameric ring arranged as a trimer of dimers.

The catalysed reaction is tRNA(n+1) + phosphate = tRNA(n) + a ribonucleoside 5'-diphosphate. In terms of biological role, phosphorolytic 3'-5' exoribonuclease that plays an important role in tRNA 3'-end maturation. Removes nucleotide residues following the 3'-CCA terminus of tRNAs; can also add nucleotides to the ends of RNA molecules by using nucleoside diphosphates as substrates, but this may not be physiologically important. Probably plays a role in initiation of 16S rRNA degradation (leading to ribosome degradation) during starvation. The chain is Ribonuclease PH from Salmonella agona (strain SL483).